The sequence spans 328 residues: Malate dehydrogenase (328 aa).

12-18 contacts NAD(+); it reads GAAGQIG. Substrate-binding residues include arginine 93 and arginine 99. NAD(+) contacts are provided by residues asparagine 106, glutamine 113, and 130-132; that span reads VGN. Substrate-binding residues include asparagine 132 and arginine 166. Histidine 191 (proton acceptor) is an active-site residue.

This sequence belongs to the LDH/MDH superfamily. MDH type 2 family.

The enzyme catalyses (S)-malate + NAD(+) = oxaloacetate + NADH + H(+). Functionally, catalyzes the reversible oxidation of malate to oxaloacetate. This Dechloromonas aromatica (strain RCB) protein is Malate dehydrogenase.